Reading from the N-terminus, the 307-residue chain is MLQRTLAKSISVTGVGLHSGERVALTLHPAPENSGISFRRTDLDGEMGEQIKLTPYLINDTRLSSTIVTDKGVRVGTIEHIMSALSAYGIDNALIELNAPEIPIMDGSSLPFIYLLQDAGVVDQKAQKRFLKILKPVEIKEAGKWVRFTPYDGFKVTLTIEFDHPVFNRSSPTFEIDFAGKSYIDEIARARTFGFMHEVEMMRAHNLGLGGNLNNAIVIDDTDVLNPEGLRYPDEFVRHKILDAIGDLYIVGHPIVGAFEGYKSGHAINNALLRAVLADETAYDRVEFADSDDLPDAFHELNIRTCG.

Positions 80, 239, and 243 each coordinate Zn(2+). Histidine 266 functions as the Proton donor in the catalytic mechanism.

The protein belongs to the LpxC family. Zn(2+) is required as a cofactor.

The catalysed reaction is a UDP-3-O-[(3R)-3-hydroxyacyl]-N-acetyl-alpha-D-glucosamine + H2O = a UDP-3-O-[(3R)-3-hydroxyacyl]-alpha-D-glucosamine + acetate. It participates in glycolipid biosynthesis; lipid IV(A) biosynthesis; lipid IV(A) from (3R)-3-hydroxytetradecanoyl-[acyl-carrier-protein] and UDP-N-acetyl-alpha-D-glucosamine: step 2/6. Functionally, catalyzes the hydrolysis of UDP-3-O-myristoyl-N-acetylglucosamine to form UDP-3-O-myristoylglucosamine and acetate, the committed step in lipid A biosynthesis. This Neisseria meningitidis serogroup C (strain 053442) protein is UDP-3-O-acyl-N-acetylglucosamine deacetylase.